Consider the following 87-residue polypeptide: Small ribosomal subunit protein eS21 (87 aa).

Belongs to the eukaryotic ribosomal protein eS21 family. In terms of assembly, component of the small ribosomal subunit. Mature ribosomes consist of a small (40S) and a large (60S) subunit. The 40S subunit contains about 33 different proteins and 1 molecule of RNA (18S). The 60S subunit contains about 49 different proteins and 3 molecules of RNA (25S, 5.8S and 5S).

It is found in the cytoplasm. Functionally, required for the processing of the 20S rRNA-precursor to mature 18S rRNA in a late step of the maturation of 40S ribosomal subunits. Has a physiological role leading to 18S rRNA stability. This chain is Small ribosomal subunit protein eS21 (RPS21), found in Candida glabrata (strain ATCC 2001 / BCRC 20586 / JCM 3761 / NBRC 0622 / NRRL Y-65 / CBS 138) (Yeast).